Here is an 88-residue protein sequence, read N- to C-terminus: Stannin (88 aa).

At 1–10 (MSIMDHSPTT) the chain is on the mitochondrial intermembrane side. A helical transmembrane segment spans residues 11–31 (GVVTVIVILIAIAALGALILG). Over 32 to 88 (CWCYLRLQRISQSEDEESIVGDGETKEPFLLVQYSAKGPCVERKAKLMTANSPEVHG) the chain is Cytoplasmic. 2 positions are modified to phosphoserine: serine 49 and serine 83.

It belongs to the stannin family. In terms of assembly, monomer.

Its subcellular location is the mitochondrion outer membrane. Its function is as follows. Plays a role in the toxic effects of organotins. Plays a role in endosomal maturation. The protein is Stannin (Snn) of Mus musculus (Mouse).